A 352-amino-acid polypeptide reads, in one-letter code: Ion-translocating oxidoreductase complex subunit D (352 aa).

5 helical membrane passes run 20 to 40 (IMLLVLLAAVPGIAAQLWFFG), 42 to 62 (GTLVQILLASVSALLAEALVL), 78 to 109 (ALLTGLLLAVSIPPLAPWWMVVLGTVFAVIIA), 123 to 143 (PAMIGYVVLLISFPVQMTSWL), and 148 to 168 (IAVNILGFIDAIQVIFSGHTA). Residue threonine 187 is modified to FMN phosphoryl threonine. 5 consecutive transmembrane segments (helical) span residues 214–234 (ILAGAGWQWVNLAWLAGGVWL), 242–262 (WHIPLSFLVTLALCATLGWLF), 267–287 (LAAPQIHLLSGATMLGAFFIL), 301–321 (LIFGALAGLLVWLIRSFGGYP), and 322–342 (DGVAFAVLLANITVPLIDYYT).

This sequence belongs to the NqrB/RnfD family. As to quaternary structure, the complex is composed of six subunits: RsxA, RsxB, RsxC, RsxD, RsxE and RsxG. FMN is required as a cofactor.

The protein localises to the cell inner membrane. Functionally, part of a membrane-bound complex that couples electron transfer with translocation of ions across the membrane. Required to maintain the reduced state of SoxR. The protein is Ion-translocating oxidoreductase complex subunit D of Shigella dysenteriae serotype 1 (strain Sd197).